A 360-amino-acid chain; its full sequence is Cyclin-dependent kinase 10 (360 aa).

The region spanning 39–323 (FEKLNRIGEG…AGDCLESSYF (285 aa)) is the Protein kinase domain. ATP is bound by residues 45–53 (IGEGTYGIV) and Lys68. Asp163 (proton acceptor) is an active-site residue. Thr196 bears the Phosphothreonine mark. A disordered region spans residues 334–360 (LMPTFPHHRNKRAAPATSEGQSKRCKP).

The protein belongs to the protein kinase superfamily. CMGC Ser/Thr protein kinase family. CDC2/CDKX subfamily. Heterodimer with CCNQ, the interaction is required for kinase activity. Interacts with ETS2. Interacts with PRK2.

The protein resides in the cytoplasm. It is found in the cytoskeleton. The protein localises to the cilium basal body. The enzyme catalyses L-seryl-[protein] + ATP = O-phospho-L-seryl-[protein] + ADP + H(+). It catalyses the reaction L-threonyl-[protein] + ATP = O-phospho-L-threonyl-[protein] + ADP + H(+). Cyclin-dependent kinase that phosphorylates the transcription factor ETS2 (in vitro) and positively controls its proteasomal degradation (in cells). Involved in the regulation of actin cytoskeleton organization through the phosphorylation of actin dynamics regulators such as PKN2. Is a negative regulator of ciliogenesis through phosphorylation of PKN2 and promotion of RhoA signaling. This is Cyclin-dependent kinase 10 (CDK10) from Homo sapiens (Human).